A 187-amino-acid polypeptide reads, in one-letter code: Large ribosomal subunit protein uL5 (187 aa).

Belongs to the universal ribosomal protein uL5 family. In terms of assembly, part of the 50S ribosomal subunit; part of the 5S rRNA/L5/L18/L25 subcomplex. Contacts the 5S rRNA and the P site tRNA. Forms a bridge to the 30S subunit in the 70S ribosome.

This is one of the proteins that bind and probably mediate the attachment of the 5S RNA into the large ribosomal subunit, where it forms part of the central protuberance. In the 70S ribosome it contacts protein S13 of the 30S subunit (bridge B1b), connecting the 2 subunits; this bridge is implicated in subunit movement. Contacts the P site tRNA; the 5S rRNA and some of its associated proteins might help stabilize positioning of ribosome-bound tRNAs. In Mycobacteroides abscessus (strain ATCC 19977 / DSM 44196 / CCUG 20993 / CIP 104536 / JCM 13569 / NCTC 13031 / TMC 1543 / L948) (Mycobacterium abscessus), this protein is Large ribosomal subunit protein uL5.